The primary structure comprises 527 residues: Peptide chain release factor 3 (527 aa).

Residues 9-278 (NKRRTFAIIS…GLTQWAPKPQ (270 aa)) enclose the tr-type G domain. GTP contacts are provided by residues 18–25 (SHPDAGKT), 86–90 (DTPGH), and 140–143 (NKLD).

The protein belongs to the TRAFAC class translation factor GTPase superfamily. Classic translation factor GTPase family. PrfC subfamily.

It localises to the cytoplasm. In terms of biological role, increases the formation of ribosomal termination complexes and stimulates activities of RF-1 and RF-2. It binds guanine nucleotides and has strong preference for UGA stop codons. It may interact directly with the ribosome. The stimulation of RF-1 and RF-2 is significantly reduced by GTP and GDP, but not by GMP. This is Peptide chain release factor 3 from Haemophilus influenzae (strain PittEE).